The sequence spans 530 residues: GMP synthase [glutamine-hydrolyzing] (530 aa).

Positions 18-207 (TILVLDFGSQ…AVDICQAKTN (190 aa)) constitute a Glutamine amidotransferase type-1 domain. The active-site Nucleophile is C94. Catalysis depends on residues H181 and E183. One can recognise a GMPS ATP-PPase domain in the interval 208 to 405 (WSMENFIDTE…LGVPEDLVWR (198 aa)). An ATP-binding site is contributed by 236–242 (SGGVDST). Residues R309, D467, K522, and E528 each coordinate XMP.

Homodimer. Mg(2+) is required as a cofactor.

The protein localises to the cytoplasm. Its subcellular location is the cytosol. The enzyme catalyses XMP + L-glutamine + ATP + H2O = GMP + L-glutamate + AMP + diphosphate + 2 H(+). It participates in purine metabolism; GMP biosynthesis; GMP from XMP (L-Gln route): step 1/1. Its function is as follows. Catalyzes the conversion of xanthine monophosphate (XMP) to GMP in the presence of glutamine and ATP through an adenyl-XMP intermediate. This is GMP synthase [glutamine-hydrolyzing] (GUA1) from Candida albicans (strain SC5314 / ATCC MYA-2876) (Yeast).